Consider the following 92-residue polypeptide: uncharacterized protein (92 aa).

The next 2 membrane-spanning stretches (helical) occupy residues 34–54 (GLGI…FMFG) and 65–85 (LLYI…ASTV).

It localises to the cell membrane. This is an uncharacterized protein from Bacillus anthracis.